The primary structure comprises 206 residues: Dehydration-responsive element-binding protein 2D (206 aa).

The disordered stretch occupies residues 13–40 (ANKKQRTVQASSRKGCMRGKGGPDNASC). A DNA-binding region (AP2/ERF) is located at residues 41 to 98 (TYKGVRQRTWGKWVAEIREPNRGARLWLGTFDTSREAALAYDSAARKLYGPEAHLNLP). Positions 102-139 (RSYPKTASSPASQTTPSSNTGGKSSSDSESPCSSNEMS) are disordered. A compositionally biased stretch (low complexity) spans 107 to 139 (TASSPASQTTPSSNTGGKSSSDSESPCSSNEMS).

Belongs to the AP2/ERF transcription factor family. ERF subfamily.

It localises to the nucleus. Its function is as follows. Putative transcriptional activator that binds specifically to the DNA sequence 5'-[AG]CCGAC-3'. Binding to the C-repeat/DRE element mediates high salinity-inducible transcription. The polypeptide is Dehydration-responsive element-binding protein 2D (DREB2D) (Arabidopsis thaliana (Mouse-ear cress)).